Consider the following 574-residue polypeptide: E3 ubiquitin-protein ligase TRIM23 (574 aa).

The segment at 31 to 76 adopts an RING-type; degenerate zinc-finger fold; that stretch reads CGVCEDVFSLQGDKVPRLLLCGHTVCHDCLTRLPLHGRAIRCPFDR. The B box-type; degenerate zinc finger occupies 122-168; the sequence is ESIIRCDEDEAHVASVYCTVCATHLCSDCSQVTHSTKTLAKHRRVPL. Residues 352–379 adopt a coiled-coil conformation; sequence RVVLAKQEITRLLETLQKQQQQFTEVAD. The segment at 390-574 is ARF-like; sequence TFTKDNRVHI…LVAAGVLDVA (185 aa). GTP-binding positions include 411–418, 454–458, and 513–516; these read GLDGAGKT, DVGGK, and NKQD.

It in the C-terminal section; belongs to the small GTPase superfamily. Arf family. In terms of assembly, homodimer. Interacts with PSCD1. Interacts with UBE2D2. Interacts with TBK1 (via N-terminal kinase domain) and p62/SQSTM1.

It is found in the cytoplasm. The protein resides in the endomembrane system. The protein localises to the golgi apparatus membrane. Its subcellular location is the lysosome membrane. The catalysed reaction is S-ubiquitinyl-[E2 ubiquitin-conjugating enzyme]-L-cysteine + [acceptor protein]-L-lysine = [E2 ubiquitin-conjugating enzyme]-L-cysteine + N(6)-ubiquitinyl-[acceptor protein]-L-lysine.. The protein operates within protein modification; protein ubiquitination. Acts as an E3 ubiquitin-protein ligase. Plays an essential role in autophagy activation during viral infection. Mechanistically, activates TANK-binding kinase 1/TBK1 by facilitating its dimerization and ability to phosphorylate the selective autophagy receptor SQSTM1. In order to achieve this function, TRIM23 mediates 'Lys-27'-linked auto-ubiquitination of its ADP-ribosylation factor (ARF) domain to induce its GTPase activity and its recruitment to autophagosomes. This Mus musculus (Mouse) protein is E3 ubiquitin-protein ligase TRIM23 (Trim23).